The chain runs to 344 residues: Dihydroorotate dehydrogenase (quinone) (344 aa).

FMN contacts are provided by residues 65–69 (AGLDK) and T89. Substrate is bound at residue K69. 114-118 (NRMGF) contributes to the substrate binding site. FMN-binding residues include N145 and N178. N178 is a substrate binding site. S181 serves as the catalytic Nucleophile. Residue N183 coordinates substrate. The FMN site is built by K223 and T251. Residue 252-253 (NT) coordinates substrate. Residues G274, G303, and 324-325 (YS) contribute to the FMN site.

It belongs to the dihydroorotate dehydrogenase family. Type 2 subfamily. In terms of assembly, monomer. The cofactor is FMN.

It is found in the cell membrane. It carries out the reaction (S)-dihydroorotate + a quinone = orotate + a quinol. The protein operates within pyrimidine metabolism; UMP biosynthesis via de novo pathway; orotate from (S)-dihydroorotate (quinone route): step 1/1. In terms of biological role, catalyzes the conversion of dihydroorotate to orotate with quinone as electron acceptor. This chain is Dihydroorotate dehydrogenase (quinone), found in Cupriavidus pinatubonensis (strain JMP 134 / LMG 1197) (Cupriavidus necator (strain JMP 134)).